A 239-amino-acid chain; its full sequence is Apoptosis regulator Bcl-2 (239 aa).

The BH4 motif lies at 10–30 (DNREIVMKYIHYKLSQRGYEW). The tract at residues 39 to 85 (PPGAAPAPGIFSSQPGHTPHPAASRDPVARTSPLQTPAAPGAAAGPA) is disordered. Phosphothreonine; by MAPK8 is present on threonine 69. Position 70 is a phosphoserine; by MAPK8 and PKC (serine 70). Residues 75 to 85 (PAAPGAAAGPA) show a composition bias toward low complexity. At serine 87 the chain carries Phosphoserine; by MAPK8. Positions 92 to 107 (VVHLTLRQAGDDFSRR) are required for interaction with SEPTIN4 isoform ARTS. Required XIAP-mediated ubiquitination and apoptosis. The BH3 signature appears at 93–107 (VHLTLRQAGDDFSRR). Positions 136–155 (ELFRDGVNWGRIVAFFEFGG) match the BH1 motif. The short motif at 187 to 202 (TWIQDNGGWDAFVELY) is the BH2 element. A helical transmembrane segment spans residues 212–233 (FSWLSLKTLLSLALVGACITLG).

Belongs to the Bcl-2 family. As to quaternary structure, forms homodimers, and heterodimers with BAX, BAD, BAK and Bcl-X(L). Heterodimerization with BAX requires intact BH1 and BH2 motifs, and is necessary for anti-apoptotic activity. Part of a complex composed of SEPTIN4 isoform ARTS, XIAP and BCL2, within the complex interacts (via BH3 domain) with SEPTIN4 isoform ARTS and XIAP, SEPTIN4 isoform ARTS acts as a scaffold protein and stabilizes the complex. Component of the complex, at least composed of LRPPRC, BECN1 and BCL2; the interactions prevent BECN1 from forming an autophagy-inducing complex with PIK3C3. Interacts with EI24. Also interacts with APAF1, BBC3, BCL2L1, BNIPL, MRPL41 and TP53BP2. Binding to FKBP8 seems to target BCL2 to the mitochondria and probably interferes with the binding of BCL2 to its targets. Interacts with BAG1 in an ATP-dependent manner. Interacts with RAF1 (the 'Ser-338' and 'Ser-339' phosphorylated form). Interacts (via the BH4 domain) with EGLN3; the interaction prevents the formation of the BAX-BCL2 complex and inhibits the anti-apoptotic activity of BCL2. Interacts with G0S2; this interaction also prevents the formation of the anti-apoptotic BAX-BCL2 complex. Interacts with RTL10/BOP. Interacts with the SCF(FBXO10) complex. Interacts (via the loop between motifs BH4 and BH3) with NLRP1 (via LRR repeats), but not with NLRP2, NLRP3, NLRP4, PYCARD, nor MEFV. Interacts with GIMAP3/IAN4, GIMAP4/IAN1 and GIMAP5/IAN5. Interacts with BCAP31. Interacts with IRF3; the interaction is inhibited by Sendai virus infection. Interacts with BECN1; thereby inhibiting autophagy in non-starvation conditions. Interacts with AMBRA1; thereby inhibiting autophagy. (Microbial infection) Interacts with Toxoplasma gondii ROP17; the interaction probably promotes BCL2 phosphorylation and degradation. Phosphorylation/dephosphorylation on Ser-70 regulates anti-apoptotic activity. Growth factor-stimulated phosphorylation on Ser-70 by PKC is required for the anti-apoptosis activity and occurs during the G2/M phase of the cell cycle. In the absence of growth factors, BCL2 appears to be phosphorylated by other protein kinases such as ERKs and stress-activated kinases. Phosphorylated by MAPK8/JNK1 at Thr-69, Ser-70 and Ser-87, which stimulates starvation-induced autophagy. Dephosphorylated by protein phosphatase 2A (PP2A). Post-translationally, proteolytically cleaved by caspases during apoptosis. The cleaved protein, lacking the BH4 motif, has pro-apoptotic activity, causes the release of cytochrome c into the cytosol promoting further caspase activity. In terms of processing, monoubiquitinated by PRKN, leading to an increase in its stability. Ubiquitinated by SCF(FBXO10), leading to its degradation by the proteasome. Ubiquitinated by XIAP, leading to its degradation by the proteasome. In terms of tissue distribution, expressed in a variety of tissues.

Its subcellular location is the mitochondrion outer membrane. It localises to the nucleus membrane. The protein localises to the endoplasmic reticulum membrane. It is found in the cytoplasm. Its function is as follows. Suppresses apoptosis in a variety of cell systems including factor-dependent lymphohematopoietic and neural cells. Regulates cell death by controlling the mitochondrial membrane permeability. Appears to function in a feedback loop system with caspases. Inhibits caspase activity either by preventing the release of cytochrome c from the mitochondria and/or by binding to the apoptosis-activating factor (APAF-1). Also acts as an inhibitor of autophagy: interacts with BECN1 and AMBRA1 during non-starvation conditions and inhibits their autophagy function. May attenuate inflammation by impairing NLRP1-inflammasome activation, hence CASP1 activation and IL1B release. The sequence is that of Apoptosis regulator Bcl-2 (BCL2) from Homo sapiens (Human).